A 230-amino-acid polypeptide reads, in one-letter code: CDP-diacylglycerol--inositol 3-phosphatidyltransferase (230 aa).

Residues 1 to 28 are Cytoplasmic-facing; the sequence is MPSAKSSDLSPTKTNLESTTKQKVSVQD. Residues 29–51 form a helical membrane-spanning segment; it reads IFLYIPNLIGYLRIITAIISFLC. Over 52–57 the chain is Lumenal; it reads MANHPV. Residues 58–77 form a helical membrane-spanning segment; the sequence is ATLIFYGISGFLDAFDGYAA. Residues Asp70 and Asp73 each coordinate Mg(2+). Residues Gly74, Arg78, and Thr84 each contribute to the a CDP-1,2-diacyl-sn-glycerol site. The Cytoplasmic segment spans residues 78–89; that stretch reads RKFNQGTRFGAV. Residues 90 to 110 traverse the membrane as a helical segment; it reads LDMVTDRCATSSLIVYLGVLY. Mg(2+) is bound by residues Asp91 and Asp95. Residue Asp95 is the Proton acceptor of the active site. Topologically, residues 111-112 are lumenal; that stretch reads PQ. A helical membrane pass occupies residues 113–133; the sequence is YTVFWQILVSLDLSSHYMHMY. The Cytoplasmic portion of the chain corresponds to 134 to 161; that stretch reads AMLSAGSTSHKNVDETQSKLLSLYYNNR. Residues 162–182 form a helical membrane-spanning segment; it reads LVLFFVCLINELFYMAVYLHY. The Lumenal segment spans residues 183-184; it reads YK. Residues 185–205 form a helical membrane-spanning segment; the sequence is FFWLGTVMLVASTPIWLFKQI. The Cytoplasmic portion of the chain corresponds to 206–230; it reads ANIIQLKNASLILARMDAHDHSKRD.

This sequence belongs to the CDP-alcohol phosphatidyltransferase class-I family. Mn(2+) is required as a cofactor. It depends on Mg(2+) as a cofactor.

It localises to the endoplasmic reticulum membrane. It catalyses the reaction a CDP-1,2-diacyl-sn-glycerol + myo-inositol = a 1,2-diacyl-sn-glycero-3-phospho-(1D-myo-inositol) + CMP + H(+). With respect to regulation, inhibited by calcium and zinc ions. Inhibited by nucleoside triphosphates and diphosphates. In terms of biological role, catalyzes the synthesis of phosphatidylinositol (PtdIns). Required for proper membrane dynamics and cell wall integrity. In Candida albicans (strain SC5314 / ATCC MYA-2876) (Yeast), this protein is CDP-diacylglycerol--inositol 3-phosphatidyltransferase.